A 566-amino-acid chain; its full sequence is Oxygen-dependent choline dehydrogenase (566 aa).

7–36 provides a ligand contact to FAD; sequence DYIICGAGSAGNVLATRLTEDPNVTVLLLE. The segment at 180–203 is disordered; the sequence is NGYQQEGFGPMDRTVTPKGRRAST. The Proton acceptor role is filled by histidine 474.

Belongs to the GMC oxidoreductase family. Requires FAD as cofactor.

The catalysed reaction is choline + A = betaine aldehyde + AH2. It catalyses the reaction betaine aldehyde + NAD(+) + H2O = glycine betaine + NADH + 2 H(+). The protein operates within amine and polyamine biosynthesis; betaine biosynthesis via choline pathway; betaine aldehyde from choline (cytochrome c reductase route): step 1/1. Involved in the biosynthesis of the osmoprotectant glycine betaine. Catalyzes the oxidation of choline to betaine aldehyde and betaine aldehyde to glycine betaine at the same rate. The chain is Oxygen-dependent choline dehydrogenase from Burkholderia ambifaria (strain MC40-6).